The following is a 62-amino-acid chain: Conotoxin Mi5.2 (62 aa).

Residues 1–19 form the signal peptide; that stretch reads MRCVPVFIILLLLIPSASS. Residues 20–50 constitute a propeptide that is removed on maturation; the sequence is VDVQPLTRDDVPLASFLDDARRTLRSPWMTR.

This sequence belongs to the conotoxin T superfamily. In terms of processing, contains 2 disulfide bonds that can be either 'C1-C3, C2-C4' or 'C1-C4, C2-C3', since these disulfide connectivities have been observed for conotoxins with cysteine framework V (for examples, see AC P0DQQ7 and AC P81755). As to expression, expressed by the venom duct.

The protein localises to the secreted. This Conus miles (Soldier cone) protein is Conotoxin Mi5.2.